Consider the following 185-residue polypeptide: Translation initiation factor IF-3, chloroplastic (185 aa).

This sequence belongs to the IF-3 family. As to quaternary structure, monomer.

The protein resides in the plastid. It is found in the chloroplast. IF-3 binds to the 30S ribosomal subunit and shifts the equilibrium between 70S ribosomes and their 50S and 30S subunits in favor of the free subunits, thus enhancing the availability of 30S subunits on which protein synthesis initiation begins. The polypeptide is Translation initiation factor IF-3, chloroplastic (Cyanidium caldarium (Red alga)).